The primary structure comprises 214 residues: MKFFLDTANVEAIRAINELGVVDGVTTNPSIISREGRDFETVIKEICEIVDGPISAEVTGLTAEEMIAEARSIAKWHDNVVVKIPMTTEGLKATNVLSQEGIKTNVTLIFTVSQGLMAMKAGATYISPFIGRLEDIGADPYQLISDLRGIIDLYGFQAEIIAASIRTAAHVEAVAQLGAHIATIPDPLFAKMTEHPLTTNGLKTFMEDWASFKK.

Catalysis depends on lysine 83, which acts as the Schiff-base intermediate with substrate.

It belongs to the transaldolase family. Type 3B subfamily.

It is found in the cytoplasm. The enzyme catalyses D-sedoheptulose 7-phosphate + D-glyceraldehyde 3-phosphate = D-erythrose 4-phosphate + beta-D-fructose 6-phosphate. The protein operates within carbohydrate degradation; pentose phosphate pathway; D-glyceraldehyde 3-phosphate and beta-D-fructose 6-phosphate from D-ribose 5-phosphate and D-xylulose 5-phosphate (non-oxidative stage): step 2/3. Functionally, transaldolase is important for the balance of metabolites in the pentose-phosphate pathway. In Streptococcus equi subsp. zooepidemicus (strain MGCS10565), this protein is Probable transaldolase.